The chain runs to 191 residues: General negative regulator of transcription subunit 2 (191 aa).

This sequence belongs to the CNOT2/3/5 family. As to quaternary structure, forms a NOT protein complex that comprises NOT1, NOT2, NOT3, NOT4 and NOT5. Subunit of the 1.0 MDa CCR4-NOT core complex that contains CCR4, CAF1, NOT1, NOT2, NOT3, NOT4, NOT5, CAF40 and CAF130. In the complex interacts with NOT1 and NOT5. The core complex probably is part of a less characterized 1.9 MDa CCR4-NOT complex.

It localises to the cytoplasm. The protein localises to the nucleus. Its function is as follows. Acts as a component of the CCR4-NOT core complex, which in the nucleus seems to be a general transcription factor, and in the cytoplasm the major mRNA deadenylase involved in mRNA turnover. NOT2 is required for the integrity of the complex. The NOT protein subcomplex negatively regulates the basal and activated transcription of many genes. Preferentially affects TC-type TATA element-dependent transcription. Could directly or indirectly inhibit component(s) of the general transcription machinery. The chain is General negative regulator of transcription subunit 2 (CDC36) from Saccharomyces cerevisiae (strain ATCC 204508 / S288c) (Baker's yeast).